A 283-amino-acid polypeptide reads, in one-letter code: Acetylglutamate kinase (283 aa).

Substrate-binding positions include 63–64, arginine 85, and asparagine 178; that span reads GG.

This sequence belongs to the acetylglutamate kinase family. ArgB subfamily.

The protein localises to the cytoplasm. It catalyses the reaction N-acetyl-L-glutamate + ATP = N-acetyl-L-glutamyl 5-phosphate + ADP. It functions in the pathway amino-acid biosynthesis; L-arginine biosynthesis; N(2)-acetyl-L-ornithine from L-glutamate: step 2/4. Its function is as follows. Catalyzes the ATP-dependent phosphorylation of N-acetyl-L-glutamate. The polypeptide is Acetylglutamate kinase (Prochlorococcus marinus (strain MIT 9515)).